A 311-amino-acid chain; its full sequence is Phosphopantothenate--cysteine ligase (311 aa).

The residue at position 2 (Ala2) is an N-acetylalanine.

This sequence belongs to the PPC synthetase family. In terms of assembly, homodimer.

The enzyme catalyses (R)-4'-phosphopantothenate + L-cysteine + ATP = N-[(R)-4-phosphopantothenoyl]-L-cysteine + AMP + diphosphate + H(+). The catalysed reaction is (R)-4'-phosphopantothenate + L-cysteine + CTP = N-[(R)-4-phosphopantothenoyl]-L-cysteine + CMP + diphosphate + H(+). It functions in the pathway cofactor biosynthesis; coenzyme A biosynthesis; CoA from (R)-pantothenate: step 2/5. Catalyzes the second step in the biosynthesis of coenzyme A from vitamin B5, where cysteine is conjugated to 4'-phosphopantothenate to form 4-phosphopantothenoylcysteine. Has a preference for ATP over CTP as a cosubstrate. The protein is Phosphopantothenate--cysteine ligase (PPCS) of Homo sapiens (Human).